The following is a 601-amino-acid chain: Putative Lon protease homolog (601 aa).

Positions 363-560 (GEIVGQINGL…YQACELLFGR (198 aa)) constitute a Lon proteolytic domain. Residues Ser455 and Lys498 contribute to the active site.

This sequence belongs to the peptidase S16 family.

The protein is Putative Lon protease homolog of Haemophilus influenzae (strain ATCC 51907 / DSM 11121 / KW20 / Rd).